The sequence spans 203 residues: Small ribosomal subunit protein uS4 (203 aa).

Residues 20-45 (LPGLTRKRPKNTNPPGMHGAERKKKS) are disordered. An S4 RNA-binding domain is found at 92 to 155 (MRLDCIVFRL…SSRKLVAAYA (64 aa)).

This sequence belongs to the universal ribosomal protein uS4 family. In terms of assembly, part of the 30S ribosomal subunit. Contacts protein S5. The interaction surface between S4 and S5 is involved in control of translational fidelity.

Its function is as follows. One of the primary rRNA binding proteins, it binds directly to 16S rRNA where it nucleates assembly of the body of the 30S subunit. Functionally, with S5 and S12 plays an important role in translational accuracy. The protein is Small ribosomal subunit protein uS4 of Synechococcus sp. (strain JA-3-3Ab) (Cyanobacteria bacterium Yellowstone A-Prime).